The chain runs to 1375 residues: DNA-directed RNA polymerase subunit beta (1375 aa).

It belongs to the RNA polymerase beta chain family. The RNAP catalytic core consists of 2 alpha, 1 beta, 1 beta' and 1 omega subunit. When a sigma factor is associated with the core the holoenzyme is formed, which can initiate transcription.

The catalysed reaction is RNA(n) + a ribonucleoside 5'-triphosphate = RNA(n+1) + diphosphate. Functionally, DNA-dependent RNA polymerase catalyzes the transcription of DNA into RNA using the four ribonucleoside triphosphates as substrates. This chain is DNA-directed RNA polymerase subunit beta, found in Oleidesulfovibrio alaskensis (strain ATCC BAA-1058 / DSM 17464 / G20) (Desulfovibrio alaskensis).